A 455-amino-acid chain; its full sequence is UDP-N-acetylmuramate--L-alanine ligase (455 aa).

109 to 115 (GTHGKTT) is an ATP binding site.

It belongs to the MurCDEF family.

The protein localises to the cytoplasm. The enzyme catalyses UDP-N-acetyl-alpha-D-muramate + L-alanine + ATP = UDP-N-acetyl-alpha-D-muramoyl-L-alanine + ADP + phosphate + H(+). It participates in cell wall biogenesis; peptidoglycan biosynthesis. Functionally, cell wall formation. This is UDP-N-acetylmuramate--L-alanine ligase from Caldicellulosiruptor bescii (strain ATCC BAA-1888 / DSM 6725 / KCTC 15123 / Z-1320) (Anaerocellum thermophilum).